The sequence spans 142 residues: Acidic phospholipase A2 Bc-PL (142 aa).

The first 9 residues, 1–9 (AVCVSLLGA), serve as a signal peptide directing secretion. The propeptide occupies 10 to 17 (ANIPPQPL). Disulfide bonds link cysteine 28–cysteine 94, cysteine 44–cysteine 141, cysteine 46–cysteine 62, cysteine 61–cysteine 122, cysteine 68–cysteine 115, cysteine 78–cysteine 108, and cysteine 101–cysteine 113. Residues tyrosine 45, glycine 47, and glycine 49 each coordinate Ca(2+). Histidine 65 is an active-site residue. Residue aspartate 66 participates in Ca(2+) binding. Aspartate 116 is an active-site residue.

It belongs to the phospholipase A2 family. Group I subfamily. D49 sub-subfamily. It depends on Ca(2+) as a cofactor. Expressed by the venom gland.

The protein localises to the secreted. It carries out the reaction a 1,2-diacyl-sn-glycero-3-phosphocholine + H2O = a 1-acyl-sn-glycero-3-phosphocholine + a fatty acid + H(+). PLA2 catalyzes the calcium-dependent hydrolysis of the 2-acyl groups in 3-sn-phosphoglycerides. The polypeptide is Acidic phospholipase A2 Bc-PL (Bungarus candidus (Malayan krait)).